A 178-amino-acid polypeptide reads, in one-letter code: MAKTAIAYKEKMKELSMLSLICSCFYPEPRNIAAYTFDDMEVKQLNKRASGQAFELILKPPSPVSEAPRTLASPKRKDVSLEEIQAKLEAAEERRKSQEAQILKQLAEKREHEREVLQKALEENNNFSRMAEEKLVLKMEQIKENREYYLASLMERLKEKERHAADVRKNKEQLELSG.

The SLD domain maps to 38–178 (DDMEVKQLNK…KNKEQLELSG (141 aa)). Positions 75–178 (KRKDVSLEEI…KNKEQLELSG (104 aa)) form a coiled coil.

It belongs to the stathmin family. In terms of tissue distribution, nervous tissue.

The protein localises to the cytoplasm. The protein resides in the membrane. Its subcellular location is the cell projection. It localises to the lamellipodium. The polypeptide is Stathmin-2-B (stmn2-b) (Xenopus laevis (African clawed frog)).